The primary structure comprises 1348 residues: Kinesin-like protein KIF7 (1348 aa).

One can recognise a Kinesin motor domain in the interval Pro15–Ile349. Gly94 to Thr101 contacts ATP. Residues His358–Gly479 form an interaction with DLG5 region. Residues His358 to Glu1211 are interaction with SMO. Disordered regions lie at residues Arg451–Thr486 and Ala607–Glu674. The stretch at Arg480–Gln542 forms a coiled coil. Residues Ser620–Glu636 are compositionally biased toward acidic residues. Coiled-coil stretches lie at residues Ala698 to Leu1057 and Phe1109 to Glu1211. Position 903 is a phosphoserine (Ser903). Disordered regions lie at residues Leu1288–Met1314 and Lys1328–Leu1348.

It belongs to the TRAFAC class myosin-kinesin ATPase superfamily. Kinesin family. As to quaternary structure, can form homodimers and interacts with microtubules. Interacts with GLI1 and SMO. Interacts with GLI2, GLI3 and SUFU. Interacts with NPHP1. Interacts with SMO and DLG5 (via PDZ4 or guanylate kinase-like domain). Polyubiquitinated by UBR3. Expressed in heart, lung, liver, kidney, testis, spleen and cerebellum.

Its subcellular location is the cell projection. The protein localises to the cilium. It localises to the cytoplasm. The protein resides in the cytoskeleton. It is found in the cilium basal body. In terms of biological role, essential for hedgehog signaling regulation: acts both as a negative and a positive regulator of sonic hedgehog (Shh) and Indian hedgehog (Ihh) pathways, acting downstream of SMO, through both SUFU-dependent and -independent mechanisms. Involved in the regulation of microtubular dynamics. Required for proper organization of the ciliary tip and control of ciliary localization of SUFU-GLI2 complexes. Required for localization of GLI3 to cilia in response to Shh. Negatively regulates Shh signaling by preventing inappropriate activation of the transcriptional activator GLI2 in the absence of ligand. Positively regulates Shh signaling by preventing the processing of the transcription factor GLI3 into its repressor form. In keratinocytes, promotes the dissociation of SUFU-GLI2 complexes, GLI2 nuclear translocation and Shh signaling activation. Involved in the regulation of epidermal differentiation and chondrocyte development. The protein is Kinesin-like protein KIF7 (Kif7) of Mus musculus (Mouse).